Here is a 300-residue protein sequence, read N- to C-terminus: Junctional adhesion molecule A (300 aa).

A signal peptide spans 1 to 26; sequence MGTEGKAGSKLLFLFTSMILGSLVQG. Residues 27 to 238 are Extracellular-facing; sequence KGSVYSPQTA…MEAVELNVGG (212 aa). Ig-like V-type domains lie at 28–122 and 134–228; these read GSVY…GEVS and PTVS…EAVR. Disulfide bonds link Cys-49-Cys-108 and Cys-152-Cys-212. An N-linked (GlcNAc...) asparagine glycan is attached at Asn-185. The helical transmembrane segment at 239–259 threads the bilayer; that stretch reads IVAAVLVTLILLGLLIFGIWF. Residues 260–300 are Cytoplasmic-facing; the sequence is AYSRGYFERTKKGTAPGKKVIYSQPSARSEGEFKQTSSFLV. A phosphoserine mark is found at Ser-282, Ser-285, and Ser-288.

It belongs to the immunoglobulin superfamily. Interacts with the ninth PDZ domain of MPDZ. Interacts with the first PDZ domain of PARD3. The association between PARD3 and PARD6B probably disrupts this interaction. Interacts with ITGAL (via I-domain). Interacts with CD151. N-glycosylated.

It is found in the cell junction. It localises to the tight junction. The protein localises to the cell membrane. In terms of biological role, seems to play a role in epithelial tight junction formation. Appears early in primordial forms of cell junctions and recruits PARD3. The association of the PARD6-PARD3 complex may prevent the interaction of PARD3 with JAM1, thereby preventing tight junction assembly. Plays a role in regulating monocyte transmigration involved in integrity of epithelial barrier. Ligand for integrin alpha-L/beta-2 involved in memory T-cell and neutrophil transmigration. The chain is Junctional adhesion molecule A (F11r) from Rattus norvegicus (Rat).